Consider the following 337-residue polypeptide: Phytanoyl-CoA dioxygenase, peroxisomal (337 aa).

The transit peptide at 1-30 directs the protein to the peroxisome; it reads MDRNRASARLTVLLRHLGCRSAGTIIAHHT. N6-succinyllysine is present on residues lysine 59 and lysine 108. Residues lysine 120, methionine 157, 175 to 177, and tryptophan 193 contribute to the 2-oxoglutarate site; that span reads HQD. Positions 175 and 177 each coordinate Fe cation. Residue lysine 252 is modified to N6-succinyllysine. Residue histidine 264 coordinates Fe cation. 2-oxoglutarate is bound by residues serine 266 and arginine 275.

This sequence belongs to the PhyH family. Interacts with FKBP52 and PHYHIP. Requires Fe cation as cofactor. L-ascorbate is required as a cofactor. The cofactor is ATP. It depends on Mg(2+) as a cofactor.

The protein localises to the peroxisome. It catalyses the reaction phytanoyl-CoA + 2-oxoglutarate + O2 = 2-hydroxyphytanoyl-CoA + succinate + CO2. The catalysed reaction is 3-methylhexadecanoyl-CoA + 2-oxoglutarate + O2 = 2-hydroxy-3-methylhexadecanoyl-CoA + succinate + CO2. It carries out the reaction hexadecanoyl-CoA + 2-oxoglutarate + O2 = 2-hydroxyhexadecanoyl-CoA + succinate + CO2. The enzyme catalyses octanoyl-CoA + 2-oxoglutarate + O2 = 2-hydroxyoctanoyl-CoA + succinate + CO2. It catalyses the reaction decanoyl-CoA + 2-oxoglutarate + O2 = 2-hydroxydecanoyl-CoA + succinate + CO2. The catalysed reaction is 3-methylbutanoyl-CoA + 2-oxoglutarate + O2 = 2-hydroxy-3-methylbutanoyl-CoA + succinate + CO2. It carries out the reaction heptadecanoyl-CoA + 2-oxoglutarate + O2 = 2-hydroxyheptadecanoyl-CoA + succinate + CO2. The enzyme catalyses eicosanoyl-CoA + 2-oxoglutarate + O2 = 2-hydroxyeicosanoyl-CoA + succinate + CO2. It catalyses the reaction octadecanoyl-CoA + 2-oxoglutarate + O2 = 2-hydroxyoctadecanoyl-CoA + succinate + CO2. The catalysed reaction is dodecanoyl-CoA + 2-oxoglutarate + O2 = 2-hydroxydodecanoyl-CoA + succinate + CO2. It carries out the reaction tetradecanoyl-CoA + 2-oxoglutarate + O2 = 2-hydroxytetradecanoyl-CoA + succinate + CO2. The enzyme catalyses hexanoyl-CoA + 2-oxoglutarate + O2 = 2-hydroxyhexanoyl-CoA + succinate + CO2. It catalyses the reaction butanoyl-CoA + 2-oxoglutarate + O2 = 2-hydroxybutanoyl-CoA + succinate + CO2. The catalysed reaction is 3-methylnonanoyl-CoA + 2-oxoglutarate + O2 = 2-hydroxy-3-methylnonanoyl-CoA + succinate + CO2. It carries out the reaction 3-methylundecanoyl-CoA + 2-oxoglutarate + O2 = 2-hydroxy-3-methylundecanoyl-CoA + succinate + CO2. The enzyme catalyses 3-methyldodecanoyl-CoA + 2-oxoglutarate + O2 = 2-hydroxy-3-methyldodecanoyl-CoA + succinate + CO2. It functions in the pathway lipid metabolism; fatty acid metabolism. Functionally, catalyzes the 2-hydroxylation of not only racemic phytanoyl-CoA and the isomers of 3-methylhexadecanoyl-CoA, but also a variety of other mono- branched 3-methylacyl-CoA esters (with a chain length of at least seven carbon atoms) and straight-chain acyl-CoA esters (with a chain length longer than four carbon atoms). Does not hydroxylate long and very long straight chain acyl-CoAs or 2-methyl-and 4-methyl-branched acyl-CoAs. The chain is Phytanoyl-CoA dioxygenase, peroxisomal (PHYH) from Bos taurus (Bovine).